A 93-amino-acid chain; its full sequence is MSDDNDEDAPAVELGEGARVAGAPIARVASRLTWALQKSEVVRKEGDTVVRTPDGPRDLDAVLEDVSTPYFETRREFERDVRAAMGAGPVPTE.

This is Protein VNG_0358C from Halobacterium salinarum (strain ATCC 700922 / JCM 11081 / NRC-1) (Halobacterium halobium).